Reading from the N-terminus, the 361-residue chain is Mitochondrial import receptor subunit TOM40 homolog (361 aa).

Residues 1-73 form a disordered region; sequence MGNVLAASSP…GAAAASEDGS (73 aa). A compositionally biased stretch (pro residues) spans 11–36; sequence PAGPPPPPTPSLVGLPPPPPSPPGFT. The span at 40–50 shows a compositional bias: gly residues; the sequence is LGGGLGTGSST. Positions 51–69 are enriched in low complexity; it reads GRGSERTPGAAASGAAAAS.

It belongs to the Tom40 family. As to quaternary structure, forms part of the preprotein translocase complex of the outer mitochondrial membrane (TOM complex) which consists of at least 7 different proteins (TOMM5, TOMM6, TOMM7, TOMM20, TOMM22, TOMM40 and TOMM70). Interacts with mitochondrial targeting sequences. Interacts with TIMM29; linking the TIM22 complex to the TOM complex. Forms a complex with BCAP31 (via C-terminus) which mediates the translocation of components of the mitochondrial membrane respiratory chain NADH dehydrogenase (Complex I) from the cytosol to the mitochondria. Interacts (via N-terminus) with CYP1A1 (via mitochondrial targeting signal); this interaction is required for CYP1A1 translocation across the mitochondrial outer membrane.

Its subcellular location is the mitochondrion outer membrane. Its function is as follows. Channel-forming protein essential for import of protein precursors into mitochondria. Plays a role in the assembly of the mitochondrial membrane respiratory chain NADH dehydrogenase (Complex I) by forming a complex with BCAP31 and mediating the translocation of Complex I components from the cytosol to the mitochondria. This Mus musculus (Mouse) protein is Mitochondrial import receptor subunit TOM40 homolog (Tomm40).